We begin with the raw amino-acid sequence, 876 residues long: Ergothioneine biosynthesis protein 1 (876 aa).

An L-histidine N(alpha)-methyltransferase region spans residues isoleucine 36–leucine 350. Tyrosine 88 contacts L-histidine. S-adenosyl-L-methionine is bound by residues glycine 119, lysine 125, and aspartate 146. L-histidine is bound by residues asparagine 202, tyrosine 242, and glutamate 315–serine 317. The hercynylcysteine S-oxide synthase stretch occupies residues alanine 378–arginine 874. Fe cation contacts are provided by histidine 413, histidine 506, and histidine 510. Disordered regions lie at residues glycine 631–proline 650 and threonine 732–threonine 761. The span at proline 744–serine 758 shows a compositional bias: low complexity.

In the N-terminal section; belongs to the methyltransferase superfamily. EgtD family. The protein in the C-terminal section; belongs to the EgtB family. The cofactor is Fe(2+).

It localises to the cytoplasm. Its subcellular location is the nucleus. The catalysed reaction is L-histidine + 3 S-adenosyl-L-methionine = hercynine + 3 S-adenosyl-L-homocysteine + 3 H(+). It catalyses the reaction hercynine + L-cysteine + O2 = S-(hercyn-2-yl)-L-cysteine S-oxide + H2O. It functions in the pathway amino-acid biosynthesis; ergothioneine biosynthesis. Catalyzes the SAM-dependent triple methylation of the alpha-amino group of histidine to form hercynine and subsequent conjugation with cysteine and oxygen to form hercynylcysteine sulfoxide, the first two steps in the biosynthesis pathway of ergothioneine. Ergothioneine is an unusual thio-histidine betaine amino acid that acts as an antioxidant against peroxide in conidia and contributes to conidial longevity. This chain is Ergothioneine biosynthesis protein 1, found in Neurospora crassa (strain ATCC 24698 / 74-OR23-1A / CBS 708.71 / DSM 1257 / FGSC 987).